A 399-amino-acid chain; its full sequence is MKTEYDILIIGAGPGGAMAAKTAAEEGLSVLMVEKRPAIGTPVRCAEGVGKELLHEFIGPDPAWISADIERATIVGPDGTSMSLEAQRAGNEVGYILDRKVFDRALVWQAAEAGAEVQVKTRAIAPILENGFVRGARLQGYGTTTDVRAKVVIAADGVESKFARWCGVDTAVPVNEIETCAQYLLTDIDIDESATVFYLGNEIAPEGYAWVFPKGKRTANVGLGISGKKNLPGNRPIDYLNRFVEKNFPNGKTIECIVGGVSVCTPLASTVSDGLMIVGDAARISDPLTGGGIYNAMYSGRLAAQVAIECIKRGDCSRAALAAYDQQWRVSAMGKALDRNYKIKEYFIRQSDEKLNALAHSFKKINMEKFSTLELIKELIKHNPKLLFELKTLRDSLNS.

Gly15, Glu34, Cys45, Ala46, Gly48, Arg99, Ala123, Asp280, Gly292, and Ile293 together coordinate FAD.

It belongs to the geranylgeranyl reductase family. DGGGPL reductase subfamily. Requires FAD as cofactor.

The catalysed reaction is a 2,3-bis-O-phytanyl-sn-glycerol 1-phospholipid + 8 oxidized 2[4Fe-4S]-[ferredoxin] = a 2,3-bis-O-(geranylgeranyl)-sn-glycerol 1-phospholipid + 8 reduced 2[4Fe-4S]-[ferredoxin] + 16 H(+). It catalyses the reaction 2,3-bis-O-(phytanyl)-sn-glycerol 1-phosphate + 8 oxidized 2[4Fe-4S]-[ferredoxin] = 2,3-bis-O-(geranylgeranyl)-sn-glycerol 1-phosphate + 8 reduced 2[4Fe-4S]-[ferredoxin] + 16 H(+). It carries out the reaction a 2,3-bis-O-phytanyl-sn-glycerol 1-phospholipid + 8 A = a 2,3-bis-O-(geranylgeranyl)-sn-glycerol 1-phospholipid + 8 AH2. The enzyme catalyses CDP-2,3-bis-O-(geranylgeranyl)-sn-glycerol + 8 AH2 = CDP-2,3-bis-O-(phytanyl)-sn-glycerol + 8 A. The catalysed reaction is archaetidylserine + 8 AH2 = 2,3-bis-O-phytanyl-sn-glycero-3-phospho-L-serine + 8 A. Its pathway is membrane lipid metabolism; glycerophospholipid metabolism. Functionally, is involved in the reduction of 2,3-digeranylgeranylglycerophospholipids (unsaturated archaeols) into 2,3-diphytanylglycerophospholipids (saturated archaeols) in the biosynthesis of archaeal membrane lipids. Catalyzes the formation of archaetidic acid (2,3-di-O-phytanyl-sn-glyceryl phosphate) from 2,3-di-O-geranylgeranylglyceryl phosphate (DGGGP) via the hydrogenation of each double bond of the isoprenoid chains. Is also probably able to reduce double bonds of geranyl groups in CDP-2,3-bis-O-(geranylgeranyl)-sn-glycerol and archaetidylserine, thus acting at various stages in the biosynthesis of archaeal membrane lipids. In Methanosphaerula palustris (strain ATCC BAA-1556 / DSM 19958 / E1-9c), this protein is Digeranylgeranylglycerophospholipid reductase.